A 601-amino-acid polypeptide reads, in one-letter code: Invasin CotH3 (601 aa).

The first 17 residues, 1–17, serve as a signal peptide directing secretion; sequence MKLSIISAAFLVAITHA. Residues Asn-28, Asn-85, Asn-170, Asn-324, Asn-449, Asn-527, Asn-541, Asn-554, Asn-561, and Asn-571 are each glycosylated (N-linked (GlcNAc...) asparagine). Residues 539–579 are compositionally biased toward low complexity; that stretch reads SANGTTAAAPAPAAGNSTGKGGNQSISSSASSNKTSAQSTS. The interval 539-581 is disordered; sequence SANGTTAAAPAPAAGNSTGKGGNQSISSSASSNKTSAQSTSGA. Ser-579 carries GPI-anchor amidated serine lipidation. The propeptide at 580-601 is removed in mature form; sequence GASRSKTAPIVLAISALALLVF.

Interacts with HSPA5/BiP on the cell surface of host nasal epithelial cells.

It is found in the cell membrane. Functionally, promotes invasion of host epithelial cells by adhering to receptors on the host cell surface to facilitate endocytosis of the pathogen into host cells. Binds HSPA5/BiP protein on the cell surface of host nasal epithelial cells. The sequence is that of Invasin CotH3 from Rhizopus delemar (strain RA 99-880 / ATCC MYA-4621 / FGSC 9543 / NRRL 43880) (Mucormycosis agent).